Here is a 55-residue protein sequence, read N- to C-terminus: Large ribosomal subunit protein bL33B (55 aa).

The protein belongs to the bacterial ribosomal protein bL33 family.

The polypeptide is Large ribosomal subunit protein bL33B (Rhodococcus jostii (strain RHA1)).